The sequence spans 199 residues: Recombination protein RecR (199 aa).

Residues 56–71 (CATCGNVAQEEQCNIC) form a C4-type zinc finger. Residues 79 to 174 (SVICVVEEPK…KVTRLASGLP (96 aa)) form the Toprim domain.

It belongs to the RecR family.

May play a role in DNA repair. It seems to be involved in an RecBC-independent recombinational process of DNA repair. It may act with RecF and RecO. This Streptomyces coelicolor (strain ATCC BAA-471 / A3(2) / M145) protein is Recombination protein RecR.